An 886-amino-acid chain; its full sequence is Valine--tRNA ligase (886 aa).

Residues 53 to 63 (PNVTGSLHMGH) carry the 'HIGH' region motif. Residues 540 to 544 (KMSKS) carry the 'KMSKS' region motif. Residue Lys-543 participates in ATP binding. A coiled-coil region spans residues 819–851 (TIDVAAERRRLEKELAGAQKELASTAAKLANAD).

The protein belongs to the class-I aminoacyl-tRNA synthetase family. ValS type 1 subfamily. Monomer.

Its subcellular location is the cytoplasm. It catalyses the reaction tRNA(Val) + L-valine + ATP = L-valyl-tRNA(Val) + AMP + diphosphate. Its function is as follows. Catalyzes the attachment of valine to tRNA(Val). As ValRS can inadvertently accommodate and process structurally similar amino acids such as threonine, to avoid such errors, it has a 'posttransfer' editing activity that hydrolyzes mischarged Thr-tRNA(Val) in a tRNA-dependent manner. The sequence is that of Valine--tRNA ligase from Mycobacterium tuberculosis (strain CDC 1551 / Oshkosh).